A 670-amino-acid polypeptide reads, in one-letter code: DNA ligase (670 aa).

NAD(+) is bound by residues D32–D36, S81–L82, and E113. K115 functions as the N6-AMP-lysine intermediate in the catalytic mechanism. Positions 136, 173, 290, and 314 each coordinate NAD(+). Residues C408, C411, C426, and C432 each coordinate Zn(2+). In terms of domain architecture, BRCT spans E592–E670.

Belongs to the NAD-dependent DNA ligase family. LigA subfamily. It depends on Mg(2+) as a cofactor. Mn(2+) serves as cofactor.

The enzyme catalyses NAD(+) + (deoxyribonucleotide)n-3'-hydroxyl + 5'-phospho-(deoxyribonucleotide)m = (deoxyribonucleotide)n+m + AMP + beta-nicotinamide D-nucleotide.. In terms of biological role, DNA ligase that catalyzes the formation of phosphodiester linkages between 5'-phosphoryl and 3'-hydroxyl groups in double-stranded DNA using NAD as a coenzyme and as the energy source for the reaction. It is essential for DNA replication and repair of damaged DNA. This chain is DNA ligase, found in Yersinia pseudotuberculosis serotype O:1b (strain IP 31758).